We begin with the raw amino-acid sequence, 455 residues long: Serine--tRNA ligase (455 aa).

252–254 (TAE) lines the L-serine pocket. ATP contacts are provided by residues 283–285 (RKE) and valine 299. L-serine is bound at residue glutamate 306. 370–373 (EVVS) serves as a coordination point for ATP. An L-serine-binding site is contributed by threonine 406.

This sequence belongs to the class-II aminoacyl-tRNA synthetase family. Type-1 seryl-tRNA synthetase subfamily. As to quaternary structure, homodimer. The tRNA molecule binds across the dimer.

The protein resides in the cytoplasm. It carries out the reaction tRNA(Ser) + L-serine + ATP = L-seryl-tRNA(Ser) + AMP + diphosphate + H(+). The catalysed reaction is tRNA(Sec) + L-serine + ATP = L-seryl-tRNA(Sec) + AMP + diphosphate + H(+). Its pathway is aminoacyl-tRNA biosynthesis; selenocysteinyl-tRNA(Sec) biosynthesis; L-seryl-tRNA(Sec) from L-serine and tRNA(Sec): step 1/1. In terms of biological role, catalyzes the attachment of serine to tRNA(Ser). Is also able to aminoacylate tRNA(Sec) with serine, to form the misacylated tRNA L-seryl-tRNA(Sec), which will be further converted into selenocysteinyl-tRNA(Sec). The chain is Serine--tRNA ligase from Pyrococcus abyssi (strain GE5 / Orsay).